A 163-amino-acid polypeptide reads, in one-letter code: T-cell surface glycoprotein CD3 zeta chain (163 aa).

The signal sequence occupies residues 1-21; that stretch reads MKWKALFTAAILQAQLPITEA. At 22-30 the chain is on the extracellular side; that stretch reads QSFGLLDPK. Residues 31-51 form a helical membrane-spanning segment; that stretch reads LCYLLDGILFIYGVILTALFL. Residues 52–163 lie on the Cytoplasmic side of the membrane; sequence RVKFSRSADA…ALHMQALPPR (112 aa). Serine 58 carries the post-translational modification Phosphoserine. ITAM domains are found at residues 61 to 89, 99 to 127, and 130 to 158; these read APAYQQGQNQLYNELNLGRREEYDVLDKR, KPRRKNPQEGLYNELQKDKMAEAYSEIGM, and ERRRGKGHDGLYQGLSTATKDTYDALHMQ. Tyrosine 64, tyrosine 72, tyrosine 83, tyrosine 110, tyrosine 122, tyrosine 141, and tyrosine 152 each carry phosphotyrosine. Residues 83–98 show a composition bias toward basic and acidic residues; sequence YDVLDKRRGRDPEMGG. Residues 83-111 form a disordered region; the sequence is YDVLDKRRGRDPEMGGKPRRKNPQEGLYN.

The protein belongs to the CD3Z/FCER1G family. In terms of assembly, the TCR-CD3 complex is composed of a CD3D/CD3E and a CD3G/CD3E heterodimers that preferentially associate with TCRalpha and TCRbeta, respectively, to form TCRalpha/CD3E/CD3G and TCRbeta/CD3G/CD3E trimers. In turn, the hexamer interacts with CD3Z homodimer to form the TCR-CD3 complex. Alternatively, TCRalpha and TCRbeta can be replaced by TCRgamma and TCRdelta. Interacts with SLA. Interacts with TRAT1. Interacts with DOCK2. Interacts with SLA2. Interacts with SHB. Interacts with ZAP70. Interacts (tyrosine phosphorylated) with SHC1 (via SH2 domain). Interacts with PTPRC. Interacts with CRK; this interaction regulates CD3Z phosphorylation. Interacts (on T cell side) with CD81, ICAM1 and CD9 at immunological synapses between antigen-presenting cells and T cells. Interacts with CD160. Interacts with LY6E. Interacts with LY6E. The signaling subunit of immunoglobulin gamma (IgG) Fc receptor complex. As a homodimer or a heterodimer with FCER1G, associates with the ligand binding subunit FCGR3A (via transmembrane domain); this interaction is a prerequisite for Fc receptor complex expression on the cell surface. Interacts with CD5. In terms of processing, phosphorylated on Tyr residues after T-cell receptor triggering by LCK in association with CD4/CD8.

The protein localises to the cell membrane. Part of the TCR-CD3 complex present on T-lymphocyte cell surface that plays an essential role in adaptive immune response. When antigen presenting cells (APCs) activate T-cell receptor (TCR), TCR-mediated signals are transmitted across the cell membrane by the CD3 chains CD3D, CD3E, CD3G and CD3Z. All CD3 chains contain immunoreceptor tyrosine-based activation motifs (ITAMs) in their cytoplasmic domain. Upon TCR engagement, these motifs become phosphorylated by Src family protein tyrosine kinases LCK and FYN, resulting in the activation of downstream signaling pathways. CD3Z ITAMs phosphorylation creates multiple docking sites for the protein kinase ZAP70 leading to ZAP70 phosphorylation and its conversion into a catalytically active enzyme. Plays an important role in intrathymic T-cell differentiation. Additionally, participates in the activity-dependent synapse formation of retinal ganglion cells (RGCs) in both the retina and dorsal lateral geniculate nucleus (dLGN). The protein is T-cell surface glycoprotein CD3 zeta chain (CD247) of Sus scrofa (Pig).